Reading from the N-terminus, the 346-residue chain is 3-dehydroquinate synthase (346 aa).

Residues 62 to 67, 96 to 100, 120 to 121, lysine 133, lysine 142, and 160 to 163 contribute to the NAD(+) site; these read DGEEYK, GVISD, TT, and FLRT. Glutamate 175, histidine 234, and histidine 251 together coordinate Zn(2+).

It belongs to the sugar phosphate cyclases superfamily. Dehydroquinate synthase family. Requires Co(2+) as cofactor. Zn(2+) serves as cofactor. NAD(+) is required as a cofactor.

It is found in the cytoplasm. The catalysed reaction is 7-phospho-2-dehydro-3-deoxy-D-arabino-heptonate = 3-dehydroquinate + phosphate. Its pathway is metabolic intermediate biosynthesis; chorismate biosynthesis; chorismate from D-erythrose 4-phosphate and phosphoenolpyruvate: step 2/7. In terms of biological role, catalyzes the conversion of 3-deoxy-D-arabino-heptulosonate 7-phosphate (DAHP) to dehydroquinate (DHQ). In Campylobacter curvus (strain 525.92), this protein is 3-dehydroquinate synthase.